Here is a 94-residue protein sequence, read N- to C-terminus: Small ribosomal subunit protein bS16 (94 aa).

This sequence belongs to the bacterial ribosomal protein bS16 family.

The protein is Small ribosomal subunit protein bS16 of Thermosipho africanus (strain TCF52B).